Reading from the N-terminus, the 402-residue chain is Flavohemoprotein (402 aa).

A Globin domain is found at 1 to 136; sequence MLSEKTIEIV…IADAFISIEA (136 aa). His85 is a binding site for heme b. Catalysis depends on charge relay system residues Tyr95 and Glu135. The interval 147–402 is reductase; that stretch reads GGWKDFRNFV…EFFGPAASLQ (256 aa). The 111-residue stretch at 150–260 folds into the FAD-binding FR-type domain; the sequence is KDFRNFVVVK…SAPAGDFVLN (111 aa). FAD is bound by residues Tyr188 and 204–207; that span reads RQYS. Position 273 to 278 (273 to 278) interacts with NADP(+); the sequence is GVGITP. Position 394-397 (394-397) interacts with FAD; sequence FFGP.

This sequence belongs to the globin family. Two-domain flavohemoproteins subfamily. In the C-terminal section; belongs to the flavoprotein pyridine nucleotide cytochrome reductase family. Heme b is required as a cofactor. The cofactor is FAD.

The enzyme catalyses 2 nitric oxide + NADPH + 2 O2 = 2 nitrate + NADP(+) + H(+). The catalysed reaction is 2 nitric oxide + NADH + 2 O2 = 2 nitrate + NAD(+) + H(+). Is involved in NO detoxification in an aerobic process, termed nitric oxide dioxygenase (NOD) reaction that utilizes O(2) and NAD(P)H to convert NO to nitrate, which protects the bacterium from various noxious nitrogen compounds. Therefore, plays a central role in the inducible response to nitrosative stress. The polypeptide is Flavohemoprotein (Bacillus anthracis).